Consider the following 304-residue polypeptide: Acetylglutamate kinase (304 aa).

Residues 82–83 (GG), R104, and N197 each bind substrate.

This sequence belongs to the acetylglutamate kinase family. ArgB subfamily.

The protein localises to the cytoplasm. The catalysed reaction is N-acetyl-L-glutamate + ATP = N-acetyl-L-glutamyl 5-phosphate + ADP. The protein operates within amino-acid biosynthesis; L-arginine biosynthesis; N(2)-acetyl-L-ornithine from L-glutamate: step 2/4. Its function is as follows. Catalyzes the ATP-dependent phosphorylation of N-acetyl-L-glutamate. The protein is Acetylglutamate kinase of Prochlorococcus marinus (strain NATL1A).